Reading from the N-terminus, the 38-residue chain is Large ribosomal subunit protein bL36 (38 aa).

This sequence belongs to the bacterial ribosomal protein bL36 family.

This is Large ribosomal subunit protein bL36 from Bacteroides fragilis (strain ATCC 25285 / DSM 2151 / CCUG 4856 / JCM 11019 / LMG 10263 / NCTC 9343 / Onslow / VPI 2553 / EN-2).